The following is a 259-amino-acid chain: Undecaprenyl-diphosphatase 4 (259 aa).

Transmembrane regions (helical) follow at residues 1 to 21 (MNWL…FLPI), 39 to 59 (AGLF…FIYY), 71 to 91 (FSKL…IGLL), 99 to 119 (ISKT…FLYV), 133 to 153 (ITYK…FPAI), 173 to 193 (AAYF…ILQF), 208 to 228 (SLIV…SWMI), and 239 to 259 (FAYY…TDVF).

The protein belongs to the UppP family.

The protein resides in the cell membrane. It carries out the reaction di-trans,octa-cis-undecaprenyl diphosphate + H2O = di-trans,octa-cis-undecaprenyl phosphate + phosphate + H(+). Its function is as follows. Catalyzes the dephosphorylation of undecaprenyl diphosphate (UPP). Confers resistance to bacitracin. In Bacillus thuringiensis subsp. konkukian (strain 97-27), this protein is Undecaprenyl-diphosphatase 4.